The primary structure comprises 878 residues: Alanine--tRNA ligase (878 aa).

Residues His-567, His-571, Cys-669, and His-673 each contribute to the Zn(2+) site.

The protein belongs to the class-II aminoacyl-tRNA synthetase family. Requires Zn(2+) as cofactor.

It is found in the cytoplasm. The catalysed reaction is tRNA(Ala) + L-alanine + ATP = L-alanyl-tRNA(Ala) + AMP + diphosphate. Functionally, catalyzes the attachment of alanine to tRNA(Ala) in a two-step reaction: alanine is first activated by ATP to form Ala-AMP and then transferred to the acceptor end of tRNA(Ala). Also edits incorrectly charged Ser-tRNA(Ala) and Gly-tRNA(Ala) via its editing domain. The polypeptide is Alanine--tRNA ligase (Rickettsia akari (strain Hartford)).